The sequence spans 366 residues: Di-N-acetylchitobiase (366 aa).

Positions 1-22 are cleaved as a signal peptide; sequence MALCGLPEFTLLLLPLLARLSA. The 344-residue stretch at 23–366 folds into the GH18 domain; it reads GDCPCSEAAL…EMWGALKPRL (344 aa). E127 (proton donor) is an active-site residue. N-linked (GlcNAc...) asparagine glycosylation is found at N131, N177, N212, N246, and N283.

Belongs to the glycosyl hydrolase 18 family.

The protein localises to the lysosome. Involved in the degradation of asparagine-linked glycoproteins. Hydrolyze of N-acetyl-beta-D-glucosamine (1-4)N-acetylglucosamine chitobiose core from the reducing end of the bond, it requires prior cleavage by glycosylasparaginase. This Mus musculus (Mouse) protein is Di-N-acetylchitobiase (Ctbs).